The chain runs to 204 residues: Proteasome subunit beta type-3 (204 aa).

The protein belongs to the peptidase T1B family. The 26S proteasome consists of a 20S proteasome core and two 19S regulatory subunits. The 20S proteasome core is composed of 28 subunits that are arranged in four stacked rings, resulting in a barrel-shaped structure. The two end rings are each formed by seven alpha subunits, and the two central rings are each formed by seven beta subunits. The catalytic chamber with the active sites is on the inside of the barrel.

Its subcellular location is the cytoplasm. It is found in the nucleus. Its function is as follows. Non-catalytic component of the proteasome, a multicatalytic proteinase complex which is characterized by its ability to cleave peptides with Arg, Phe, Tyr, Leu, and Glu adjacent to the leaving group at neutral or slightly basic pH. The proteasome has an ATP-dependent proteolytic activity. This is Proteasome subunit beta type-3 (PBC1) from Oryza sativa subsp. japonica (Rice).